We begin with the raw amino-acid sequence, 343 residues long: Methionine import ATP-binding protein MetN (343 aa).

The ABC transporter domain occupies 2–241; it reads IKLFHINKIF…PKTPIAQAFI (240 aa). 38-45 is a binding site for ATP; that stretch reads GSSGAGKS.

Belongs to the ABC transporter superfamily. Methionine importer (TC 3.A.1.24) family. As to quaternary structure, the complex is composed of two ATP-binding proteins (MetN), two transmembrane proteins (MetI) and a solute-binding protein (MetQ).

The protein localises to the cell inner membrane. It catalyses the reaction L-methionine(out) + ATP + H2O = L-methionine(in) + ADP + phosphate + H(+). The catalysed reaction is D-methionine(out) + ATP + H2O = D-methionine(in) + ADP + phosphate + H(+). Functionally, part of the ABC transporter complex MetNIQ involved in methionine import. Responsible for energy coupling to the transport system. The protein is Methionine import ATP-binding protein MetN of Photorhabdus laumondii subsp. laumondii (strain DSM 15139 / CIP 105565 / TT01) (Photorhabdus luminescens subsp. laumondii).